Consider the following 769-residue polypeptide: MPASWTSPQKSSALAPDDHGSSYEGSVSFRDVVINFSREEWQHLDLSQRNLYRDVMLETYSHLLSVGYQVPKPEVVMLEQGKEPWALQGERPRHSCPGEKLWDHNQHRKIIGYKPASSQDQKIYSGEKSYECAEFGKSFTWKSQFKVHLKVPTGEKLYVCIECGRAFVQKPEFITHQKAHMREKPYKCNECGKSVFQVSSLFRHQRIHTGEKLYQCSECGKGFPYNSDLSIHEKIHTGERHHECTDCGKAFTQRSTLKMHQKIHTGERSYICIECGQAFIQKTQLIAHRRIHSGEKPYECNNCGKSFISKSQLEVHQRIHTRLKPYICTEYGKVFSNNSNLITHEKVQSREKSSICTECGKAFTYRSELIIHQRIHTGEKPYACSDCGKAFTQKSTLTVHQRIHTGEKSYVCMKCGLAFIRKAHLVTHQIIHTGEKPYKCGHCGKLFTSKSQLHVHKRIHTGEKPYVCNKCGKAFTNRSDLITHQKTHTGEKSYICSKCGKAFTQRSDLITHQRIHTGEKPYECNTCGKAFTQKSNLNIHQKIHTGERQYECHECGKAFNQKSILIVHQKIHTGEKPYVCTECGRAFIRKSNFITHQRIHTGEKPYECSDCGKSFTSKSQLLVHQPLHTGEKPYVCAECGKAFSGRSNLSKHQKTHTGEKPYICSECGKTFRQKSELITHHRIHTGEKPYECSDCGKSFTKKSQLQVHQRIHTGEKPYVCAECGKAFSNRSNLNKHQTTHTGDKPYKCGICGKGFVQKSVFSVHQGSHA.

Residues 1–12 (MPASWTSPQKSS) are compositionally biased toward polar residues. The tract at residues 1-23 (MPASWTSPQKSSALAPDDHGSSY) is disordered. One can recognise a KRAB domain in the interval 27–97 (VSFRDVVINF…QGERPRHSCP (71 aa)). 21 C2H2-type zinc fingers span residues 158–180 (YVCI…QKAH), 186–208 (YKCN…QRIH), 214–236 (YQCS…EKIH), 242–264 (HECT…QKIH), 270–292 (YICI…RRIH), 298–320 (YECN…QRIH), 354–376 (SICT…QRIH), 382–404 (YACS…QRIH), 410–432 (YVCM…QIIH), 438–460 (YKCG…KRIH), 466–488 (YVCN…QKTH), 494–516 (YICS…QRIH), 522–544 (YECN…QKIH), 550–572 (YECH…QKIH), 578–600 (YVCT…QRIH), 606–628 (YECS…QPLH), 634–656 (YVCA…QKTH), 662–684 (YICS…HRIH), 690–712 (YECS…QRIH), 718–740 (YVCA…QTTH), and 746–768 (YKCG…QGSH).

This sequence belongs to the krueppel C2H2-type zinc-finger protein family.

Its subcellular location is the nucleus. Functionally, may be involved in transcriptional regulation. The polypeptide is Zinc finger protein 585B (ZNF585B) (Pongo abelii (Sumatran orangutan)).